Reading from the N-terminus, the 393-residue chain is Protein phosphatase 2C homolog 4 (393 aa).

The region spanning 33–368 (YNCVGSMQGY…DNMTAIIVVL (336 aa)) is the PPM-type phosphatase domain. Positions 83, 84, 310, and 359 each coordinate Mn(2+).

This sequence belongs to the PP2C family. Requires Mg(2+) as cofactor. Mn(2+) is required as a cofactor.

It catalyses the reaction O-phospho-L-seryl-[protein] + H2O = L-seryl-[protein] + phosphate. It carries out the reaction O-phospho-L-threonyl-[protein] + H2O = L-threonyl-[protein] + phosphate. This chain is Protein phosphatase 2C homolog 4 (PTC4), found in Saccharomyces cerevisiae (strain ATCC 204508 / S288c) (Baker's yeast).